Reading from the N-terminus, the 258-residue chain is MTIHLVVIDALNLIRRVHAAQPGEPDVKNTARVCCQALSKIIKFSEPSHIVAVFDHHGDDRGWRAKLLPHYKEGRKPMPPELQAGMEIIQDAFMDLGIDSLLSDGDEADDLVATLALKVASRHQQVTIISTDKGYCQLLSPTLRVRDYFQQRWLDSPFVEKEYGVKPEQLPDYWGLAGISSSKIPGIPGIGPKAALELLSLYPDLDTILQAEDLPTKWQKKITKHRESAEASKKVASLKTDLTLGFNLQDIRYLAPSS.

Mg(2+) is bound at residue D109. Residues 165-254 (VKPEQLPDYW…GFNLQDIRYL (90 aa)) form the 5'-3' exonuclease domain. Residues L176, A177, P185, I187, and I190 each contribute to the K(+) site. The interval 189–194 (GIGPKA) is interaction with DNA.

Belongs to the Xni family. It depends on Mg(2+) as a cofactor. The cofactor is K(+).

Functionally, has flap endonuclease activity. During DNA replication, flap endonucleases cleave the 5'-overhanging flap structure that is generated by displacement synthesis when DNA polymerase encounters the 5'-end of a downstream Okazaki fragment. This is Flap endonuclease Xni from Photobacterium profundum (strain SS9).